Here is a 214-residue protein sequence, read N- to C-terminus: Cutinase CUT2 (214 aa).

Positions 1-18 (MQFSLSIATAILAATASA) are cleaved as a signal peptide. Cys40 and Cys117 are oxidised to a cystine. The active-site Nucleophile is the Ser128. An intrachain disulfide couples Cys179 to Cys186. Residue Asp183 is part of the active site. Residue His196 is the Proton donor/acceptor of the active site.

It belongs to the cutinase family. In terms of processing, the 2 disulfide bonds play a critical role in holding the catalytic residues in juxta-position; reduction of the disulfide bridges results in the complete inactivation of the enzyme.

The protein localises to the secreted. The enzyme catalyses cutin + H2O = cutin monomers.. Catalyzes the hydrolysis of complex carboxylic polyesters found in the cell wall of plants. Degrades cutin, a macromolecule that forms the structure of the plant cuticle. Required for efficient penetration of the host plant cuticle by the appressorium during the initial stage of fungal infection. In Pyricularia oryzae (strain 70-15 / ATCC MYA-4617 / FGSC 8958) (Rice blast fungus), this protein is Cutinase CUT2.